The chain runs to 216 residues: uncharacterized protein (216 aa).

The 52-residue stretch at 125–176 (YPKSTNFDSHYHDCDEYWVIIEGAGTVVVGSRSFEVEVGDCVAIGMGHHHDL) folds into the Cupin type-2 domain.

This is an uncharacterized protein from Sinorhizobium fredii (strain NBRC 101917 / NGR234).